We begin with the raw amino-acid sequence, 181 residues long: Ribulose bisphosphate carboxylase small subunit, chloroplastic 1 (181 aa).

The transit peptide at M1 to R57 directs the protein to the chloroplast.

It belongs to the RuBisCO small chain family. In terms of assembly, (Microbial infection) Binds to tobamovirus movement protein; this interaction seems required for viral systemic movement. As to quaternary structure, heterohexadecamer of 8 large and 8 small subunits.

It is found in the plastid. The protein localises to the chloroplast. Its subcellular location is the cell junction. The protein resides in the plasmodesma. RuBisCO catalyzes two reactions: the carboxylation of D-ribulose 1,5-bisphosphate, the primary event in carbon dioxide fixation, as well as the oxidative fragmentation of the pentose substrate. Both reactions occur simultaneously and in competition at the same active site. Although the small subunit is not catalytic it is essential for maximal activity. Involved in antiviral defenses. This is Ribulose bisphosphate carboxylase small subunit, chloroplastic 1 from Solanum lycopersicum (Tomato).